We begin with the raw amino-acid sequence, 158 residues long: Phospholipase A2 AP-PLA2-II (158 aa).

The N-terminal stretch at 1–16 is a signal peptide; the sequence is MKTFLILAMAVALAKA. Residues 17-23 constitute a propeptide that is removed on maturation; that stretch reads QSTDEIT. 6 disulfides stabilise this stretch: Cys51–Cys158, Cys53–Cys69, Cys68–Cys138, Cys75–Cys131, Cys85–Cys124, and Cys109–Cys129. Residues Gly54 and Gly56 each coordinate Ca(2+). The active site involves His72. Asp73 serves as a coordination point for Ca(2+). Asp132 is a catalytic residue.

It belongs to the phospholipase A2 family. Group I subfamily. Monomer. It depends on Ca(2+) as a cofactor. In terms of tissue distribution, expressed by the venom gland.

It is found in the secreted. The catalysed reaction is a 1,2-diacyl-sn-glycero-3-phosphocholine + H2O = a 1-acyl-sn-glycero-3-phosphocholine + a fatty acid + H(+). Starfish phospholipase A2 (PLA2) that has hemorrhagic and capillary permeability-increasing activities and hence is considered to be deeply involved in the local inflammation. Shows hemolytic activity only in the presence of phosphatidylcholine (PC). PLA2 catalyzes the calcium-dependent hydrolysis of the 2-acyl groups in 3-sn-phosphoglycerides. This chain is Phospholipase A2 AP-PLA2-II, found in Acanthaster planci (Crown-of-thorns starfish).